The sequence spans 304 residues: CD-NTase-associated protein 6 (304 aa).

Residue 75 to 80 (GTGKTS) participates in ATP binding.

This sequence belongs to the AAA ATPase family. Oligomerizes. Homohexamer. Forms a 1:1:6 CdnD:Cap7:Cap6 complex.

Functionally, regulates complex assembly in a CBASS antivirus system. CBASS (cyclic oligonucleotide-based antiphage signaling system) provides immunity against bacteriophage. The CD-NTase protein synthesizes cyclic nucleotides in response to infection; these serve as specific second messenger signals. The signals activate a diverse range of effectors, leading to bacterial cell death and thus abortive phage infection. A type III-C(AAA) CBASS system. In terms of biological role, prevents the CdnD:Cap7:Cap8 complex (also called CdnD:HORMA2:HORMA3) from synthesizing 2',3',3'-cyclic AMP-AMP-AMP (cAAA). Binds and disassembles an active CdnD:Cap7:Cap8 complex, inhibiting the complex's ability to synthesize cyclic nucleotide second messengers. An AAA+-ATPase remodeler, in the absence of foreign threat Cap6 probably maintains the Cap7 protein in an open, inactive state. Once activated (presumably by a bacteriophage protein) Cap7 binds to and activates its cognate CD-NTase (CdnD in this bacteria) to synthesize cAAA, a cyclic nucleotide second messenger. cAAA activates the NucC endonuclease which degrades all DNA in the infected cell, causing cell death and abortive phage infection. This chain is CD-NTase-associated protein 6, found in Pseudomonas aeruginosa.